A 441-amino-acid polypeptide reads, in one-letter code: Ribosomal protein uS12 methylthiotransferase RimO (441 aa).

Residues 8-118 form the MTTase N-terminal domain; sequence PKIGFVSLGC…VLQHVHHYVP (111 aa). [4Fe-4S] cluster is bound by residues cysteine 17, cysteine 53, cysteine 82, cysteine 150, cysteine 154, and cysteine 157. Positions 136 to 373 constitute a Radical SAM core domain; that stretch reads LTPRHYAYLK…MQLQQQISAE (238 aa). The TRAM domain maps to 376–441; it reads QEKVGREILV…DEYDLWGSRV (66 aa).

This sequence belongs to the methylthiotransferase family. RimO subfamily. Requires [4Fe-4S] cluster as cofactor.

The protein resides in the cytoplasm. It carries out the reaction L-aspartate(89)-[ribosomal protein uS12]-hydrogen + (sulfur carrier)-SH + AH2 + 2 S-adenosyl-L-methionine = 3-methylsulfanyl-L-aspartate(89)-[ribosomal protein uS12]-hydrogen + (sulfur carrier)-H + 5'-deoxyadenosine + L-methionine + A + S-adenosyl-L-homocysteine + 2 H(+). Catalyzes the methylthiolation of an aspartic acid residue of ribosomal protein uS12. The sequence is that of Ribosomal protein uS12 methylthiotransferase RimO from Salmonella agona (strain SL483).